The sequence spans 72 residues: LITAF domain-containing protein (72 aa).

In terms of domain architecture, LITAF spans Met-1–Arg-71. Positions 7 and 10 each coordinate Zn(2+). The tract at residues Pro-22–Leu-45 is membrane-binding amphipathic helix. Positions 59 and 62 each coordinate Zn(2+).

Belongs to the CDIP1/LITAF family.

The protein resides in the membrane. In Homo sapiens (Human), this protein is LITAF domain-containing protein.